The primary structure comprises 36 residues: YKRGGGGWGGGGGWKGGGGGGGGWKGGGGGGKGGGG.

Positions 1-36 (YKRGGGGWGGGGGWKGGGGGGGGWKGGGGGGKGGGG) are disordered.

Functionally, possesses antifungal activity against a number of phytopathogenic fungi, including H.sativum and F.culmorum. This Cucumis melo (Muskmelon) protein is Glycine-rich protein GWK.